The following is a 331-amino-acid chain: CRISPR-associated endonuclease Cas1 (331 aa).

Mn(2+) is bound by residues E166, H228, and D243.

This sequence belongs to the CRISPR-associated endonuclease Cas1 family. In terms of assembly, homodimer, forms a heterotetramer with a Cas2 homodimer. It depends on Mg(2+) as a cofactor. Mn(2+) is required as a cofactor.

CRISPR (clustered regularly interspaced short palindromic repeat), is an adaptive immune system that provides protection against mobile genetic elements (viruses, transposable elements and conjugative plasmids). CRISPR clusters contain spacers, sequences complementary to antecedent mobile elements, and target invading nucleic acids. CRISPR clusters are transcribed and processed into CRISPR RNA (crRNA). Acts as a dsDNA endonuclease. Involved in the integration of spacer DNA into the CRISPR cassette. The sequence is that of CRISPR-associated endonuclease Cas1 from Hyperthermus butylicus (strain DSM 5456 / JCM 9403 / PLM1-5).